Consider the following 156-residue polypeptide: Probable succinate transporter subunit YjjB (156 aa).

The next 4 membrane-spanning stretches (helical) occupy residues 7-27 (WALL…AMVF), 54-74 (FGMN…VIGI), 86-106 (VFTV…TAMI), and 128-148 (FLKA…PGLW).

Belongs to the ThrE exporter (TC 2.A.79) family. The transporter is composed of YjjB and YjjP.

It localises to the cell inner membrane. Functionally, involved in succinate export with YjjP. Both proteins are required for export. The polypeptide is Probable succinate transporter subunit YjjB (Yersinia pseudotuberculosis serotype I (strain IP32953)).